Here is a 352-residue protein sequence, read N- to C-terminus: MDKVDLLSLTMEEMESLFLEIGEKKFRAKQAFQWVNKGIKQYEEMTNLSKKLIKQLSEETRITHNRIEEKFVSKIDGTVKYLFLLDDGHIIEGVLMKYKHGFTACISTQVGCAMGCQFCASTTGGLIRNLRAGEMIDQILLMQQDQGERISNIVLMGSGEPLHNYDETIRFLKIVNDPEGLNIGNRHITLSTCGLVPEIKKLGALQIPINLAISLHAPNDQLRKQTMPIAQKYTIDQLIQSCYDYLENNNRRITFEYALIEDVNDGEKEAHELSKLLKGLLCHVNLIPINPIEERTYQKSKDSQVKKFQQILKSNGIEATIRREMGTDIQGACGQLRRKYVDDQEKKEISEV.

Residue glutamate 92 is the Proton acceptor of the active site. The region spanning 98-328 (YKHGFTACIS…ATIRREMGTD (231 aa)) is the Radical SAM core domain. Cysteine 105 and cysteine 333 are joined by a disulfide. Residues cysteine 112, cysteine 116, and cysteine 119 each coordinate [4Fe-4S] cluster. S-adenosyl-L-methionine contacts are provided by residues 159–160 (GE), serine 191, 214–216 (SLH), and asparagine 290. The active-site S-methylcysteine intermediate is cysteine 333.

Belongs to the radical SAM superfamily. RlmN family. Requires [4Fe-4S] cluster as cofactor.

The protein localises to the cytoplasm. It catalyses the reaction adenosine(2503) in 23S rRNA + 2 reduced [2Fe-2S]-[ferredoxin] + 2 S-adenosyl-L-methionine = 2-methyladenosine(2503) in 23S rRNA + 5'-deoxyadenosine + L-methionine + 2 oxidized [2Fe-2S]-[ferredoxin] + S-adenosyl-L-homocysteine. The enzyme catalyses adenosine(37) in tRNA + 2 reduced [2Fe-2S]-[ferredoxin] + 2 S-adenosyl-L-methionine = 2-methyladenosine(37) in tRNA + 5'-deoxyadenosine + L-methionine + 2 oxidized [2Fe-2S]-[ferredoxin] + S-adenosyl-L-homocysteine. In terms of biological role, specifically methylates position 2 of adenine 2503 in 23S rRNA and position 2 of adenine 37 in tRNAs. This is Probable dual-specificity RNA methyltransferase RlmN from Alkaliphilus metalliredigens (strain QYMF).